Here is a 168-residue protein sequence, read N- to C-terminus: Endoribonuclease YbeY (168 aa).

Histidine 132, histidine 136, and histidine 142 together coordinate Zn(2+).

It belongs to the endoribonuclease YbeY family. Requires Zn(2+) as cofactor.

The protein localises to the cytoplasm. Functionally, single strand-specific metallo-endoribonuclease involved in late-stage 70S ribosome quality control and in maturation of the 3' terminus of the 16S rRNA. The polypeptide is Endoribonuclease YbeY (Clostridium perfringens (strain ATCC 13124 / DSM 756 / JCM 1290 / NCIMB 6125 / NCTC 8237 / Type A)).